Here is a 105-residue protein sequence, read N- to C-terminus: Urease subunit beta (105 aa).

Belongs to the urease beta subunit family. As to quaternary structure, heterotrimer of UreA (gamma), UreB (beta) and UreC (alpha) subunits. Three heterotrimers associate to form the active enzyme.

It is found in the cytoplasm. The catalysed reaction is urea + 2 H2O + H(+) = hydrogencarbonate + 2 NH4(+). It functions in the pathway nitrogen metabolism; urea degradation; CO(2) and NH(3) from urea (urease route): step 1/1. This chain is Urease subunit beta, found in Prochlorococcus marinus (strain MIT 9313).